A 1801-amino-acid chain; its full sequence is Focadhesin (1801 aa).

Lys819 carries the post-translational modification N6-acetyllysine.

Interacts with VCL. As to expression, ubiquitous. High expression in brain followed by testis, muscle, pancreas, heart, ovary, small intestine, placenta, prostate, thymus, kidney, colon, liver, lung, spleen and leukocytes. Expression is reduced in most glioblastomas and all glioblastoma cell lines.

Its subcellular location is the cell junction. It is found in the focal adhesion. The protein localises to the cytoplasm. The protein resides in the cytosol. Required for the maintenance of SKIC2 and SKIC3 proteostatic levels in the liver. May be involved in the regulation of RNA degradation by the exosome complex. Potential tumor suppressor in gliomas. The sequence is that of Focadhesin from Homo sapiens (Human).